A 292-amino-acid chain; its full sequence is MTLQHTRRIVKSLFILFIIVVCIYLLPRVAINAFYYPDNKVYGPTPAEAESITFTAKDGTHLHGWFIPTAFGRPENAVATVIHVHGNAGNMSAHWPLVSWLPERNVNLFMFDYRGFGESEGTPSQEGLLDDTKSAIDYVRHRADVNPERLVLLGQSLGGNNVLAAVGHCVGCANMRYADQAGIRAIILDSTFLSYSSIANQMIPGSGYLLDDRYSADRNIASVSPIPVLILHGTADHVIPWQDSEKLYALAREPKQKIFIPDGDHIDAFSGRYANLYRDAMIKFIQTALSAK.

Residues 13–35 form a helical membrane-spanning segment; it reads LFILFIIVVCIYLLPRVAINAFY.

It belongs to the serine esterase family.

It localises to the membrane. This is an uncharacterized protein from Salmonella typhimurium (strain LT2 / SGSC1412 / ATCC 700720).